Here is a 185-residue protein sequence, read N- to C-terminus: Threonylcarbamoyl-AMP synthase (185 aa).

The 182-residue stretch at 4-185 folds into the YrdC-like domain; the sequence is SWRVQQAAQD…IATGQVMRAG (182 aa).

This sequence belongs to the SUA5 family. TsaC subfamily.

Its subcellular location is the cytoplasm. It catalyses the reaction L-threonine + hydrogencarbonate + ATP = L-threonylcarbamoyladenylate + diphosphate + H2O. Its function is as follows. Required for the formation of a threonylcarbamoyl group on adenosine at position 37 (t(6)A37) in tRNAs that read codons beginning with adenine. Catalyzes the conversion of L-threonine, HCO(3)(-)/CO(2) and ATP to give threonylcarbamoyl-AMP (TC-AMP) as the acyladenylate intermediate, with the release of diphosphate. In Pseudomonas savastanoi pv. phaseolicola (strain 1448A / Race 6) (Pseudomonas syringae pv. phaseolicola (strain 1448A / Race 6)), this protein is Threonylcarbamoyl-AMP synthase.